An 877-amino-acid polypeptide reads, in one-letter code: Potassium transporter 23 (877 aa).

2 disordered regions span residues 1–60 (MDDD…SLDG) and 72–92 (ASAGGASGGGGGGGPLSRASS). The Cytoplasmic portion of the chain corresponds to 1-126 (MDDDDSGIQE…RGAHGHSSKE (126 aa)). Residues 12–28 (PAPPPPPPPPPPPPPPL) are compositionally biased toward pro residues. Positions 76 to 86 (GASGGGGGGGP) are enriched in gly residues. The helical transmembrane segment at 127–147 (ISMLSTVAMAFQTLGVVYGDM) threads the bilayer. Over 148-173 (GTSPLYVFSDVFSKVPIKSEVEILGA) the chain is Extracellular. Residues 174-194 (LSLVMYTIALIPFAKYVFIVL) form a helical membrane-spanning segment. The Cytoplasmic segment spans residues 195 to 260 (KANDNGEGGT…SLEKNPVFKN (66 aa)). A helical transmembrane segment spans residues 261–281 (ILLFLVLMGTSMVIGDGILTP). Residues 282–295 (SMSVMSAVSGLQGR) lie on the Extracellular side of the membrane. Residues 296 to 316 (VPGFGTDAVVIVSILFLVLLF) form a helical membrane-spanning segment. Topologically, residues 317 to 325 (SVQRFGTGK) are cytoplasmic. The helical transmembrane segment at 326 to 346 (VGFMFAPILALWFINLGTIGI) threads the bilayer. The Extracellular segment spans residues 347–379 (YNLAKYDISVVRAFNPVYIYLFFQTNGIKAWSA). Residues 380–400 (LGGCVLCITGAEAMFADLGHF) traverse the membrane as a helical segment. The Cytoplasmic segment spans residues 401–406 (SVKSIQ). A helical transmembrane segment spans residues 407 to 427 (VAFTAVVFPCLLIAYMGQAAY). Residues 428-441 (LMKYPFAVERIFYD) lie on the Extracellular side of the membrane. A helical transmembrane segment spans residues 442 to 462 (SVPEILFWPVFVIATLAAMIA). Residues 463 to 498 (SQAMISATFSCIKQAMALGCFPRIKIIHTSKKVMGQ) lie on the Cytoplasmic side of the membrane. A helical transmembrane segment spans residues 499-519 (IYIPVMNWFLMVMCIIIVATF). The Extracellular segment spans residues 520-524 (RSTND). A helical transmembrane segment spans residues 525-545 (IANAYGIAEVGVMMVSTALVT). Residues 546-555 (LVMLLIWQTN) lie on the Cytoplasmic side of the membrane. Residues 556 to 578 (LFLVMCFPVIFGSVEFVYLTAVL) form a helical membrane-spanning segment. Over 579-583 (SKIQE) the chain is Extracellular. Residues 584–604 (GGWLPLAFSSLFLCIMYTWNY) traverse the membrane as a helical segment. Over 605–877 (GSVLKYQSEM…IMRVGMTYMV (273 aa)) the chain is Cytoplasmic.

Belongs to the HAK/KUP transporter (TC 2.A.72.3) family.

The protein localises to the membrane. High-affinity potassium transporter. In Oryza sativa subsp. japonica (Rice), this protein is Potassium transporter 23 (HAK23).